The primary structure comprises 454 residues: F-box/WD repeat-containing protein 2 (454 aa).

Residues 54 to 101 (RDFLKLLPLELSFYLLKWLDPQTLLTCCLVSKQWNKVISACTEVWQTA) enclose the F-box domain. 4 WD repeats span residues 146-183 (GHSA…CVYG), 185-221 (QTHT…RTQH), 224-265 (GHTG…NTLT), and 276-314 (LQQC…NCKC). Position 298 is an N6-acetyllysine (Lys298).

In terms of assembly, directly interacts with SKP1 and CUL1.

Its function is as follows. Substrate-recognition component of the SCF (SKP1-CUL1-F-box protein)-type E3 ubiquitin ligase complex. This chain is F-box/WD repeat-containing protein 2, found in Rattus norvegicus (Rat).